The sequence spans 160 residues: MRLTVIAVGKLKQGPERELAERYRARFDDIGRKLGFRGLDIHEISESRARDAATRMAEEAAAIAALVPDGGALVTLDERGKSVDSAAFAAQLGRWRDESVPGTIFVIGGADGLLPELRRKAKLCLSFGAATWPHQMVRVMLLEQIYRAATILAGHPYHRA.

S-adenosyl-L-methionine is bound by residues Leu-76 and Gly-108.

This sequence belongs to the RNA methyltransferase RlmH family. As to quaternary structure, homodimer.

The protein resides in the cytoplasm. The catalysed reaction is pseudouridine(1915) in 23S rRNA + S-adenosyl-L-methionine = N(3)-methylpseudouridine(1915) in 23S rRNA + S-adenosyl-L-homocysteine + H(+). Specifically methylates the pseudouridine at position 1915 (m3Psi1915) in 23S rRNA. The polypeptide is Ribosomal RNA large subunit methyltransferase H (Rhodopseudomonas palustris (strain HaA2)).